A 605-amino-acid chain; its full sequence is uncharacterized protein (605 aa).

The disordered stretch occupies residues 111–151; that stretch reads VNVNDGKPNDIELSSTSKTENDPPLSLHTTPDDLQGNGVNV.

The protein localises to the golgi apparatus. This is an uncharacterized protein from Schizosaccharomyces pombe (strain 972 / ATCC 24843) (Fission yeast).